Consider the following 367-residue polypeptide: Beta sliding clamp (367 aa).

It belongs to the beta sliding clamp family. As to quaternary structure, forms a ring-shaped head-to-tail homodimer around DNA which binds and tethers DNA polymerases and other proteins to the DNA. The DNA replisome complex has a single clamp-loading complex (3 tau and 1 each of delta, delta', psi and chi subunits) which binds 3 Pol III cores (1 core on the leading strand and 2 on the lagging strand) each with a beta sliding clamp dimer. Additional proteins in the replisome are other copies of gamma, psi and chi, Ssb, DNA helicase and RNA primase.

It is found in the cytoplasm. In terms of biological role, confers DNA tethering and processivity to DNA polymerases and other proteins. Acts as a clamp, forming a ring around DNA (a reaction catalyzed by the clamp-loading complex) which diffuses in an ATP-independent manner freely and bidirectionally along dsDNA. Initially characterized for its ability to contact the catalytic subunit of DNA polymerase III (Pol III), a complex, multichain enzyme responsible for most of the replicative synthesis in bacteria; Pol III exhibits 3'-5' exonuclease proofreading activity. The beta chain is required for initiation of replication as well as for processivity of DNA replication. This Pseudomonas putida (strain ATCC 47054 / DSM 6125 / CFBP 8728 / NCIMB 11950 / KT2440) protein is Beta sliding clamp (dnaN).